A 414-amino-acid chain; its full sequence is Protein DNA-DAMAGE INDUCIBLE 1 (414 aa).

The region spanning 1–76 is the Ubiquitin-like domain; that stretch reads MRITVMTAGE…LMMMVSNASS (76 aa). Residues 213-292 enclose the Peptidase A2 domain; it reads LKAFVDSGAQ…NMEFLFGLDM (80 aa). Asp-218 is a catalytic residue. Residues 332 to 374 are disordered; it reads ERVPNDASSSGATVPSGFTEKKNNTVANPTSQQPKRQNTSEGP. Residues 355 to 372 show a composition bias toward polar residues; that stretch reads NTVANPTSQQPKRQNTSE. The region spanning 374-414 is the UBA domain; it reads PEFEAKIAKLVELGFSRDSVIQALKLFEGNEEQAAGFLFGG.

The protein belongs to the DDI1 family. As to quaternary structure, homodimer.

Its subcellular location is the cytoplasm. It is found in the cytosol. In terms of biological role, receptor of ubiquitinated protein targeted to ubiquitin/proteasome-mediated proteolysis (UPP). Relatively weak affinity for both 'Lys-48'- and 'Lys-63'-linked ubiquitin chains with a slight preference for 'Lys-48-'linked chains of three or more ubiquitin units. This is Protein DNA-DAMAGE INDUCIBLE 1 from Arabidopsis thaliana (Mouse-ear cress).